A 235-amino-acid polypeptide reads, in one-letter code: MGQKVHPNGMRLGIIKHWNSVWFSNSKDFAKILDSDYQVRLFLRKELFKASVSRIVIERPSKSIRVTIYSARPGIVIGKKGEDVEKLRLSITNITGVPTQINIAEIRKPELDAKLVADNIVSQLERRIMFRRAMKRAVQNAMRQGAKGIKVEISGRLGGTEIARREWYREGRVPLHTLRADIEYNVSEAHTTYGVIGVKVWIFKGEILGGIGSIPKIEKQKPMSQLKKHQRRYRK.

The KH type-2 domain maps to 39-107 (VRLFLRKELF…PTQINIAEIR (69 aa)).

Belongs to the universal ribosomal protein uS3 family. In terms of assembly, part of the 30S ribosomal subunit. Forms a tight complex with proteins S10 and S14.

Functionally, binds the lower part of the 30S subunit head. Binds mRNA in the 70S ribosome, positioning it for translation. This chain is Small ribosomal subunit protein uS3, found in Buchnera aphidicola subsp. Baizongia pistaciae (strain Bp).